A 252-amino-acid chain; its full sequence is Imidazole glycerol phosphate synthase subunit HisF (252 aa).

Active-site residues include Asp11 and Asp130.

The protein belongs to the HisA/HisF family. In terms of assembly, heterodimer of HisH and HisF.

The protein resides in the cytoplasm. The enzyme catalyses 5-[(5-phospho-1-deoxy-D-ribulos-1-ylimino)methylamino]-1-(5-phospho-beta-D-ribosyl)imidazole-4-carboxamide + L-glutamine = D-erythro-1-(imidazol-4-yl)glycerol 3-phosphate + 5-amino-1-(5-phospho-beta-D-ribosyl)imidazole-4-carboxamide + L-glutamate + H(+). The protein operates within amino-acid biosynthesis; L-histidine biosynthesis; L-histidine from 5-phospho-alpha-D-ribose 1-diphosphate: step 5/9. In terms of biological role, IGPS catalyzes the conversion of PRFAR and glutamine to IGP, AICAR and glutamate. The HisF subunit catalyzes the cyclization activity that produces IGP and AICAR from PRFAR using the ammonia provided by the HisH subunit. In Halothermothrix orenii (strain H 168 / OCM 544 / DSM 9562), this protein is Imidazole glycerol phosphate synthase subunit HisF.